A 289-amino-acid polypeptide reads, in one-letter code: Mitochondrial fission regulator 1-like (289 aa).

The residue at position 27 (Thr-27) is a Phosphothreonine. Ser-38 is modified (phosphoserine). Position 100 is a phosphoserine; by AMPK (Ser-100). Residues Ser-107, Ser-221, and Ser-222 each carry the phosphoserine modification. A Phosphoserine; by AMPK modification is found at Ser-235. Residues Ser-258 and Ser-270 each carry the phosphoserine modification.

The protein belongs to the MTFR1 family. In terms of processing, phosphorylated by AMPK. Upon stress, phosphorylation at Ser-100 and Ser-235 by AMPK is sufficient to induce mitochondrial fragmentation.

The protein localises to the mitochondrion outer membrane. In terms of biological role, mitochondrial protein required for adaptation of miochondrial dynamics to metabolic changes. Regulates mitochondrial morphology at steady state and mediates AMPK-dependent stress-induced mitochondrial fragmentation via the control of OPA1 levels. The chain is Mitochondrial fission regulator 1-like (Mtfr1l) from Mus musculus (Mouse).